Reading from the N-terminus, the 298-residue chain is Glycine--tRNA ligase alpha subunit (298 aa).

This sequence belongs to the class-II aminoacyl-tRNA synthetase family. In terms of assembly, tetramer of two alpha and two beta subunits.

The protein localises to the cytoplasm. The enzyme catalyses tRNA(Gly) + glycine + ATP = glycyl-tRNA(Gly) + AMP + diphosphate. The polypeptide is Glycine--tRNA ligase alpha subunit (Helicobacter acinonychis (strain Sheeba)).